A 344-amino-acid polypeptide reads, in one-letter code: Methionine import ATP-binding protein MetN (344 aa).

One can recognise an ABC transporter domain in the interval 7–245; the sequence is ISLKKISRCF…PQDDTTIAML (239 aa). An ATP-binding site is contributed by 42-49; that stretch reads GRSGAGKS.

This sequence belongs to the ABC transporter superfamily. Methionine importer (TC 3.A.1.24) family. The complex is composed of two ATP-binding proteins (MetN), two transmembrane proteins (MetI) and a solute-binding protein (MetQ).

The protein resides in the cell inner membrane. It carries out the reaction L-methionine(out) + ATP + H2O = L-methionine(in) + ADP + phosphate + H(+). It catalyses the reaction D-methionine(out) + ATP + H2O = D-methionine(in) + ADP + phosphate + H(+). Functionally, part of the ABC transporter complex MetNIQ involved in methionine import. Responsible for energy coupling to the transport system. The polypeptide is Methionine import ATP-binding protein MetN (Bartonella henselae (strain ATCC 49882 / DSM 28221 / CCUG 30454 / Houston 1) (Rochalimaea henselae)).